The primary structure comprises 334 residues: Anthranilate phosphoribosyltransferase (334 aa).

5-phospho-alpha-D-ribose 1-diphosphate-binding positions include G79, 82–83, S87, 89–92, 107–115, and S119; these read GD, NIST, and KHGNRSISS. G79 lines the anthranilate pocket. S91 contacts Mg(2+). N110 contacts anthranilate. R165 lines the anthranilate pocket. Positions 224 and 225 each coordinate Mg(2+).

It belongs to the anthranilate phosphoribosyltransferase family. In terms of assembly, homodimer. Requires Mg(2+) as cofactor.

It carries out the reaction N-(5-phospho-beta-D-ribosyl)anthranilate + diphosphate = 5-phospho-alpha-D-ribose 1-diphosphate + anthranilate. It functions in the pathway amino-acid biosynthesis; L-tryptophan biosynthesis; L-tryptophan from chorismate: step 2/5. Functionally, catalyzes the transfer of the phosphoribosyl group of 5-phosphorylribose-1-pyrophosphate (PRPP) to anthranilate to yield N-(5'-phosphoribosyl)-anthranilate (PRA). The chain is Anthranilate phosphoribosyltransferase from Streptococcus pneumoniae (strain 70585).